A 263-amino-acid chain; its full sequence is HTH-type transcriptional repressor NanR (263 aa).

The region spanning 30 to 98 (KKLSEMVEEE…NGERARVSRP (69 aa)) is the HTH gntR-type domain. Positions 58–77 (ERELMAFFNVGRPSVREALA) form a DNA-binding region, H-T-H motif.

The protein belongs to the NanR family.

Its function is as follows. Transcriptional repressor that controls expression of the genes required for the catabolism of sialic acids. The polypeptide is HTH-type transcriptional repressor NanR (Salmonella arizonae (strain ATCC BAA-731 / CDC346-86 / RSK2980)).